We begin with the raw amino-acid sequence, 70 residues long: Biotin carboxyl carrier protein of acetyl-CoA carboxylase (70 aa).

Residues 1–69 (GTVVAPMVGL…QDGIKLFALK (69 aa)) enclose the Biotinyl-binding domain. Position 35 is an N6-biotinyllysine (Lys-35).

It localises to the plastid. The protein resides in the chloroplast. Its pathway is lipid metabolism; fatty acid biosynthesis. This protein is a component of the acetyl coenzyme A carboxylase complex; first, biotin carboxylase catalyzes the carboxylation of the carrier protein and then the transcarboxylase transfers the carboxyl group to form malonyl-CoA. The protein is Biotin carboxyl carrier protein of acetyl-CoA carboxylase of Solanum lycopersicum (Tomato).